A 149-amino-acid polypeptide reads, in one-letter code: Protein Rv2250A (149 aa).

This chain is Protein Rv2250A, found in Mycobacterium tuberculosis (strain ATCC 25618 / H37Rv).